We begin with the raw amino-acid sequence, 469 residues long: Dihydroorotate dehydrogenase (quinone), mitochondrial (469 aa).

The transit peptide at 1–37 directs the protein to the mitochondrion; it reads MSSSAAALAWRRSLRDALLRGSAWRGAPAANSAAARL. The chain crosses the membrane as a helical span at residues 62–82; sequence LLTGAMIGLAIAGGAYVSTAD. Residues 150–154 and serine 174 each bind FMN; that span reads AGFDK. Substrate is bound at residue lysine 154. 199-203 provides a ligand contact to substrate; sequence NRCGF. The tract at residues 219–247 is disordered; the sequence is HGKRKMEETSSSTSPTTSDVKQGGKAGPG. Over residues 227–236 the composition is skewed to low complexity; that stretch reads TSSSTSPTTS. Residues asparagine 252 and asparagine 283 each contribute to the FMN site. 283 to 288 provides a ligand contact to substrate; sequence NVSSPN. The Nucleophile role is filled by serine 286. Residues lysine 328 and serine 356 each contribute to the FMN site. Residue 357-358 participates in substrate binding; it reads NT. Residues glycine 380, glycine 409, and 430–431 contribute to the FMN site; that span reads YT.

Belongs to the dihydroorotate dehydrogenase family. Type 2 subfamily. Requires FMN as cofactor.

Its subcellular location is the mitochondrion inner membrane. The enzyme catalyses (S)-dihydroorotate + a quinone = orotate + a quinol. Its pathway is pyrimidine metabolism; UMP biosynthesis via de novo pathway; orotate from (S)-dihydroorotate (quinone route): step 1/1. Its function is as follows. Catalyzes the conversion of dihydroorotate to orotate with quinone as electron acceptor. In Oryza sativa subsp. japonica (Rice), this protein is Dihydroorotate dehydrogenase (quinone), mitochondrial (PYRD).